The sequence spans 119 residues: Fluoride-specific ion channel FluC 1 (119 aa).

4 consecutive transmembrane segments (helical) span residues 2-22 (TGAV…GAVL), 37-57 (AGTL…TFAA), 62-82 (TMLL…SFSV), and 99-119 (HALG…LLVA). The Na(+) site is built by glycine 72 and threonine 75.

This sequence belongs to the fluoride channel Fluc/FEX (TC 1.A.43) family.

The protein resides in the cell membrane. The catalysed reaction is fluoride(in) = fluoride(out). Its activity is regulated as follows. Na(+) is not transported, but it plays an essential structural role and its presence is essential for fluoride channel function. Fluoride-specific ion channel. Important for reducing fluoride concentration in the cell, thus reducing its toxicity. This chain is Fluoride-specific ion channel FluC 1, found in Halobacterium salinarum (strain ATCC 700922 / JCM 11081 / NRC-1) (Halobacterium halobium).